A 265-amino-acid chain; its full sequence is Small ribosomal subunit protein eS4 (265 aa).

The region spanning 42–104 is the S4 RNA-binding domain; the sequence is LPLILIIRNR…TGENYRLLYD (63 aa).

Belongs to the eukaryotic ribosomal protein eS4 family.

It is found in the cytoplasm. The polypeptide is Small ribosomal subunit protein eS4 (RPS4) (Oryza sativa subsp. japonica (Rice)).